The chain runs to 428 residues: Gamma-glutamyl phosphate reductase (428 aa).

This sequence belongs to the gamma-glutamyl phosphate reductase family.

It localises to the cytoplasm. It carries out the reaction L-glutamate 5-semialdehyde + phosphate + NADP(+) = L-glutamyl 5-phosphate + NADPH + H(+). It functions in the pathway amino-acid biosynthesis; L-proline biosynthesis; L-glutamate 5-semialdehyde from L-glutamate: step 2/2. Its function is as follows. Catalyzes the NADPH-dependent reduction of L-glutamate 5-phosphate into L-glutamate 5-semialdehyde and phosphate. The product spontaneously undergoes cyclization to form 1-pyrroline-5-carboxylate. This chain is Gamma-glutamyl phosphate reductase, found in Chelativorans sp. (strain BNC1).